The chain runs to 231 residues: Putative aminodeoxychorismate lyase (231 aa).

It belongs to the class-IV pyridoxal-phosphate-dependent aminotransferase family. Pyridoxal 5'-phosphate serves as cofactor.

The protein resides in the cytoplasm. Its subcellular location is the nucleus. The catalysed reaction is 4-amino-4-deoxychorismate = 4-aminobenzoate + pyruvate + H(+). The protein operates within cofactor biosynthesis; tetrahydrofolate biosynthesis; 4-aminobenzoate from chorismate: step 2/2. Functionally, converts 4-amino-4-deoxychorismate into 4-aminobenzoate (PABA) and pyruvate. In Schizosaccharomyces pombe (strain 972 / ATCC 24843) (Fission yeast), this protein is Putative aminodeoxychorismate lyase.